Here is an 801-residue protein sequence, read N- to C-terminus: Phenylalanine--tRNA ligase beta subunit (801 aa).

The 109-residue stretch at 39–147 (GGGLDEVVVA…TDLPLGVPVF (109 aa)) folds into the tRNA-binding domain. A B5 domain is found at 401–477 (LPRRTVRFRV…RLNGYNNIPV (77 aa)). Aspartate 455, aspartate 461, glutamate 464, and glutamate 465 together coordinate Mg(2+). The FDX-ACB domain maps to 708–801 (SRFPDTFRDI…LVKKLAVTIR (94 aa)).

Belongs to the phenylalanyl-tRNA synthetase beta subunit family. Type 1 subfamily. In terms of assembly, tetramer of two alpha and two beta subunits. The cofactor is Mg(2+).

The protein resides in the cytoplasm. It catalyses the reaction tRNA(Phe) + L-phenylalanine + ATP = L-phenylalanyl-tRNA(Phe) + AMP + diphosphate + H(+). The protein is Phenylalanine--tRNA ligase beta subunit of Geobacter metallireducens (strain ATCC 53774 / DSM 7210 / GS-15).